The chain runs to 424 residues: Probable ribonuclease FAU-1 (424 aa).

The protein belongs to the FAU-1 family.

Probable RNase involved in rRNA stability through maturation and/or degradation of precursor rRNAs. Binds to RNA in loop regions with AU-rich sequences. This chain is Probable ribonuclease FAU-1, found in Saccharolobus islandicus (strain L.S.2.15 / Lassen #1) (Sulfolobus islandicus).